The primary structure comprises 283 residues: Pantothenate synthetase (283 aa).

Residue 34–41 (MGALHDGH) participates in ATP binding. H41 serves as the catalytic Proton donor. Q65 serves as a coordination point for (R)-pantoate. Q65 is a beta-alanine binding site. 152–155 (GEKD) contributes to the ATP binding site. (R)-pantoate is bound at residue Q158. ATP contacts are provided by residues V181 and 189–192 (MSSR).

This sequence belongs to the pantothenate synthetase family. In terms of assembly, homodimer.

The protein localises to the cytoplasm. It catalyses the reaction (R)-pantoate + beta-alanine + ATP = (R)-pantothenate + AMP + diphosphate + H(+). It functions in the pathway cofactor biosynthesis; (R)-pantothenate biosynthesis; (R)-pantothenate from (R)-pantoate and beta-alanine: step 1/1. Its function is as follows. Catalyzes the condensation of pantoate with beta-alanine in an ATP-dependent reaction via a pantoyl-adenylate intermediate. This Rhodopseudomonas palustris (strain BisB18) protein is Pantothenate synthetase.